The following is a 217-amino-acid chain: Neurotrophic factor BDNF precursor form (217 aa).

Positions 1–108 (PMKEVSIRGQ…AANMSMRVRR (108 aa)) are excised as a propeptide. The N-linked (GlcNAc...) asparagine glycan is linked to Asn101. Intrachain disulfides connect Cys121/Cys188 and Cys166/Cys217.

Belongs to the NGF-beta family.

It localises to the secreted. Functionally, promotes the survival of neuronal populations that are all located either in the central nervous system or directly connected to it. The protein is Neurotrophic factor BDNF precursor form (BDNF) of Acrantophis dumerili (Dumeril's ground boa).